Reading from the N-terminus, the 162-residue chain is MTRKQRRLTMIGGSLVVLAIAAALVLNALRDSIVFFSTPVMVSEHHIQPGQRFRLGGLVQNGSLVRGDNLVVTFKVSDGSATLPVTYKGILPDLFREGQGVVAEGALDSSGVFRADTVLAKHDETYMPKEVADALKKQGHWKDDYGPQAGAVEASGKQGVSQ.

At 1–7 (MTRKQRR) the chain is on the cytoplasmic side. Residues 8–28 (LTMIGGSLVVLAIAAALVLNA) traverse the membrane as a helical; Signal-anchor for type II membrane protein segment. The Periplasmic portion of the chain corresponds to 29–162 (LRDSIVFFST…EASGKQGVSQ (134 aa)). 2 residues coordinate heme: H122 and Y126. The segment at 138–162 (QGHWKDDYGPQAGAVEASGKQGVSQ) is disordered.

This sequence belongs to the CcmE/CycJ family.

It localises to the cell inner membrane. In terms of biological role, heme chaperone required for the biogenesis of c-type cytochromes. Transiently binds heme delivered by CcmC and transfers the heme to apo-cytochromes in a process facilitated by CcmF and CcmH. This Nitrobacter hamburgensis (strain DSM 10229 / NCIMB 13809 / X14) protein is Cytochrome c-type biogenesis protein CcmE.